A 181-amino-acid polypeptide reads, in one-letter code: Protein GrpE (181 aa).

Belongs to the GrpE family. In terms of assembly, homodimer.

The protein localises to the cytoplasm. Functionally, participates actively in the response to hyperosmotic and heat shock by preventing the aggregation of stress-denatured proteins, in association with DnaK and GrpE. It is the nucleotide exchange factor for DnaK and may function as a thermosensor. Unfolded proteins bind initially to DnaJ; upon interaction with the DnaJ-bound protein, DnaK hydrolyzes its bound ATP, resulting in the formation of a stable complex. GrpE releases ADP from DnaK; ATP binding to DnaK triggers the release of the substrate protein, thus completing the reaction cycle. Several rounds of ATP-dependent interactions between DnaJ, DnaK and GrpE are required for fully efficient folding. The chain is Protein GrpE from Verminephrobacter eiseniae (strain EF01-2).